The following is a 154-amino-acid chain: TSET complex member tstD (154 aa).

It belongs to the adaptor complexes small subunit family. As to quaternary structure, component of the TSET complex, a heterohexamer composed of tstA, tstB, tstC, tstD, tstE and tstF, which may act in plasma membrane turnover. tstA, tstB, tstC and tstD are likely to be the core complex members with tstE and tstF acting as associated scaffold proteins.

The protein localises to the cell membrane. Its subcellular location is the cytoplasm. This chain is TSET complex member tstD, found in Dictyostelium discoideum (Social amoeba).